The sequence spans 344 residues: Putative 2-hydroxyacid dehydrogenase YoaD (344 aa).

An NAD(+)-binding site is contributed by Asp-193. The active site involves Arg-251. Position 275 (Asp-275) interacts with NAD(+). Residue Glu-280 is part of the active site. The active-site Proton donor is the His-300.

This sequence belongs to the D-isomer specific 2-hydroxyacid dehydrogenase family.

The sequence is that of Putative 2-hydroxyacid dehydrogenase YoaD (yoaD) from Bacillus subtilis (strain 168).